The sequence spans 855 residues: DNA mismatch repair protein MutS (855 aa).

613–620 (GPNMGGKS) provides a ligand contact to ATP. The tract at residues 796–817 (TTSLPHEQPRAKPGKPAIPQQS) is disordered.

It belongs to the DNA mismatch repair MutS family.

Its function is as follows. This protein is involved in the repair of mismatches in DNA. It is possible that it carries out the mismatch recognition step. This protein has a weak ATPase activity. The sequence is that of DNA mismatch repair protein MutS from Pseudomonas syringae pv. tomato (strain ATCC BAA-871 / DC3000).